A 487-amino-acid chain; its full sequence is Glucose starvation modulator protein 1 (487 aa).

Residues 1-75 are disordered; that stretch reads MSIRFPEIPG…KRLTPQEKKA (75 aa). Over residues 59–68 the composition is skewed to polar residues; sequence SFSSSMTKRL. The segment at residues 83–111 is a DNA-binding region (zn(2)-C6 fungal-type); the sequence is CVFCHSKHLQCSHSRPCQNCIKRNLAHEC. Residues 122–139 are compositionally biased toward polar residues; the sequence is MSTTEVPAVSGESSSESG. The disordered stretch occupies residues 122–158; it reads MSTTEVPAVSGESSSESGRATGENGSEMGNPPDPQIA. The PAS domain occupies 348 to 420; the sequence is CLLDYENLSR…FRLFESVAVG (73 aa).

Belongs to the ERT1/acuK family.

It localises to the nucleus. Its function is as follows. Transcription factor which regulates nonfermentable carbon utilization. The sequence is that of Glucose starvation modulator protein 1 (GSM1) from Clavispora lusitaniae (strain ATCC 42720) (Yeast).